The chain runs to 960 residues: Phosphoenolpyruvate carboxylase 3 (960 aa).

Position 8 is a phosphoserine (Ser8). Residues His167 and Lys597 contribute to the active site.

Belongs to the PEPCase type 1 family. Homotetramer. Requires Mg(2+) as cofactor.

It is found in the cytoplasm. The catalysed reaction is oxaloacetate + phosphate = phosphoenolpyruvate + hydrogencarbonate. It functions in the pathway photosynthesis; C4 acid pathway. Its activity is regulated as follows. By light-reversible phosphorylation. In terms of biological role, through the carboxylation of phosphoenolpyruvate (PEP) it forms oxaloacetate, a four-carbon dicarboxylic acid source for the tricarboxylic acid cycle. The protein is Phosphoenolpyruvate carboxylase 3 of Sorghum bicolor (Sorghum).